The primary structure comprises 238 residues: ATP synthase subunit a (238 aa).

5 consecutive transmembrane segments (helical) span residues 17 to 37 (LSDMLMITITCLIVFIIAVAA), 75 to 95 (FLTLGVTLIMYVFVANMLGLP), 112 to 132 (DATVTLTLAVMVVALTHYYGV), 179 to 199 (ILLGLLASLGTHYGVLGAVGA), and 202 to 222 (FPIMVWQAFSIFVGTIQAFIF).

Belongs to the ATPase A chain family. F-type ATPases have 2 components, CF(1) - the catalytic core - and CF(0) - the membrane proton channel. CF(1) has five subunits: alpha(3), beta(3), gamma(1), delta(1), epsilon(1). CF(0) has three main subunits: a(1), b(2) and c(9-12). The alpha and beta chains form an alternating ring which encloses part of the gamma chain. CF(1) is attached to CF(0) by a central stalk formed by the gamma and epsilon chains, while a peripheral stalk is formed by the delta and b chains.

It localises to the cell membrane. Functionally, key component of the proton channel; it plays a direct role in the translocation of protons across the membrane. The sequence is that of ATP synthase subunit a from Bacillus sp. (strain PS3).